We begin with the raw amino-acid sequence, 421 residues long: Serine hydroxymethyltransferase (421 aa).

Residues L118 and 122–124 each bind (6S)-5,6,7,8-tetrahydrofolate; that span reads GHL. K226 is modified (N6-(pyridoxal phosphate)lysine).

The protein belongs to the SHMT family. Homodimer. The cofactor is pyridoxal 5'-phosphate.

The protein localises to the cytoplasm. It catalyses the reaction (6R)-5,10-methylene-5,6,7,8-tetrahydrofolate + glycine + H2O = (6S)-5,6,7,8-tetrahydrofolate + L-serine. The protein operates within one-carbon metabolism; tetrahydrofolate interconversion. Its pathway is amino-acid biosynthesis; glycine biosynthesis; glycine from L-serine: step 1/1. Its function is as follows. Catalyzes the reversible interconversion of serine and glycine with tetrahydrofolate (THF) serving as the one-carbon carrier. This reaction serves as the major source of one-carbon groups required for the biosynthesis of purines, thymidylate, methionine, and other important biomolecules. Also exhibits THF-independent aldolase activity toward beta-hydroxyamino acids, producing glycine and aldehydes, via a retro-aldol mechanism. The sequence is that of Serine hydroxymethyltransferase from Mycoplasmopsis agalactiae (strain NCTC 10123 / CIP 59.7 / PG2) (Mycoplasma agalactiae).